The primary structure comprises 224 residues: MNLENKSAVILLSGGLDSSTVTGLAKASKAKIFGLSFDYGQRHKKELNSALTIAKHFAIEEFKIVKLDLSLWGGSSLTDTKKDLPIEGVQLNTIPNTYVPGRNTIFISVALSYAEAINADLIGLGVNALDYSGYPDCRPDYIKKFQELAYLANKRGREDNPIKLWTPLIDLNKEDIIQLAFDHNVPLEKTWSCYSGNLKPCGKCDSCRIRQTAYKKWQIKQNEY.

12–22 (LSGGLDSSTVT) contacts ATP. Residues cysteine 193, cysteine 201, cysteine 204, and cysteine 207 each coordinate Zn(2+).

The protein belongs to the QueC family. It depends on Zn(2+) as a cofactor.

It catalyses the reaction 7-carboxy-7-deazaguanine + NH4(+) + ATP = 7-cyano-7-deazaguanine + ADP + phosphate + H2O + H(+). It participates in purine metabolism; 7-cyano-7-deazaguanine biosynthesis. In terms of biological role, catalyzes the ATP-dependent conversion of 7-carboxy-7-deazaguanine (CDG) to 7-cyano-7-deazaguanine (preQ(0)). The chain is 7-cyano-7-deazaguanine synthase from Prochlorococcus marinus (strain MIT 9515).